A 744-amino-acid polypeptide reads, in one-letter code: ATP-dependent zinc metalloprotease FtsH (744 aa).

Topologically, residues 1-16 (MQDQNNSNTPKKKKLS) are cytoplasmic. Residues 17–37 (FWGIIGIVASILVLLVIAYII) traverse the membrane as a helical segment. At 38–177 (YYYVSQTTVL…ESIWSTVLRY (140 aa)) the chain is on the extracellular side. Residues 178–198 (GTNIIFLLLFAASFIFMFMSF) form a helical membrane-spanning segment. Topologically, residues 199–744 (RSQRGTGGLL…EEKSKDEKNN (546 aa)) are cytoplasmic. 264-271 (GPPGTGKT) contributes to the ATP binding site. Position 486 (histidine 486) interacts with Zn(2+). Glutamate 487 is a catalytic residue. 2 residues coordinate Zn(2+): histidine 490 and aspartate 564. Positions 722–744 (IEANKSSSKSTVNEEKSKDEKNN) are disordered. Basic and acidic residues predominate over residues 733–744 (VNEEKSKDEKNN).

It in the central section; belongs to the AAA ATPase family. In the C-terminal section; belongs to the peptidase M41 family. Homohexamer. It depends on Zn(2+) as a cofactor.

The protein resides in the cell membrane. Functionally, acts as a processive, ATP-dependent zinc metallopeptidase for both cytoplasmic and membrane proteins. Plays a role in the quality control of integral membrane proteins. This Metamycoplasma arthritidis (strain 158L3-1) (Mycoplasma arthritidis) protein is ATP-dependent zinc metalloprotease FtsH.